Reading from the N-terminus, the 913-residue chain is Glutamate receptor ionotropic, kainate 2 (913 aa).

Over 1 to 566 the chain is Extracellular; it reads MCAGTMKIIS…VFSFLNPLSP (566 aa). N-linked (GlcNAc...) asparagine glycans are attached at residues N72, N78, N280, N383, N417, N428, and N435. The cysteines at positions 101 and 352 are disulfide-linked. The L-glutamate site is built by P521, A523, and R528. An N-linked (GlcNAc...) asparagine glycan is attached at N551. A helical transmembrane segment spans residues 567–587; that stretch reads DIWMYILLAYLGVSCVLFVIA. The Cytoplasmic portion of the chain corresponds to 588–643; that stretch reads RFSPYEWYNPHPCNPDSDVVENNFTLLNSFWFGVGALMQQGSELMPKALSTRIVGG. Residues 644 to 664 traverse the membrane as a helical segment; the sequence is IWWFFTLIIISSYTANLAAFL. At 665–824 the chain is on the extracellular side; it reads TVERMESPID…KEASALGVQN (160 aa). The L-glutamate site is built by A694, T695, and E743. C755 and C809 are joined by a disulfide. The N-linked (GlcNAc...) asparagine glycan is linked to N756. The chain crosses the membrane as a helical span at residues 825-845; sequence IGGIFIVLAAGLVLSVFVAVG. Over 846–913 the chain is Cytoplasmic; the sequence is EFLYKSKKNA…RRLPGKETMA (68 aa).

It belongs to the glutamate-gated ion channel (TC 1.A.10.1) family. GRIK2 subfamily. Homotetramer and heterotetramer with GRIK5. Tetramers may be formed by the dimerization of dimers.

It localises to the cell membrane. The protein localises to the postsynaptic cell membrane. It carries out the reaction Ca(2+)(in) = Ca(2+)(out). The enzyme catalyses Na(+)(in) = Na(+)(out). Its activity is regulated as follows. Cold receptor activity activated by temperatures between 10-19 degrees Celsius. Functionally, ionotropic glutamate receptor that functions as a cation-permeable ligand-gated ion channel, gated by L-glutamate and the glutamatergic agonist kainic acid. L-glutamate acts as an excitatory neurotransmitter at many synapses in the central nervous system. Binding of the excitatory neurotransmitter L-glutamate induces a conformation change, leading to the opening of the cation channel, and thereby converts the chemical signal to an electrical impulse. The receptor then desensitizes rapidly and enters a transient inactive state, characterized by the presence of bound agonist. In terms of biological role, independent of its ionotropic glutamate receptor activity, acts as a thermoreceptor conferring sensitivity to cold temperatures. Functions in dorsal root ganglion neurons. In Xenopus laevis (African clawed frog), this protein is Glutamate receptor ionotropic, kainate 2 (grik2).